Consider the following 231-residue polypeptide: Type 3 secretion system stator protein (231 aa).

The core secretion machinery of the T3SS is composed of approximately 20 different proteins, including cytoplasmic components, a base, an export apparatus and a needle. This subunit is part of the cytosolic complex. Interacts directly with Spa47/SctN (T3SS ATPase) and Spa33/SctQ (the major sorting platform component). Homodimer in solution.

The protein localises to the cytoplasm. In terms of biological role, component of the type III secretion system (T3SS), also called injectisome, which is used to inject bacterial effector proteins into eukaryotic host cells. Acts as a regulator of the Spa47/SctN ATPase activity. It down-regulates the ATPase activity of the oligomeric Spa47/SctN, while it up-regulates the activity of the monomeric form. Important for translocation of MxiH/SctF, the major needle component. The chain is Type 3 secretion system stator protein from Shigella flexneri.